The chain runs to 507 residues: Glucose transporter type 3 (507 aa).

Residues 1-26 (MRKGGIQDAEPVEPPQSSRKSGTWFA) are disordered. The Cytoplasmic portion of the chain corresponds to 1–53 (MRKGGIQDAEPVEPPQSSRKSGTWFAKRPSEMPERHVERAPVRQKINNVGLYK). A helical transmembrane segment spans residues 54–74 (ATLYSNIGSFFFGIAVGWSGT). The Extracellular segment spans residues 75 to 95 (AERSVMEQHSYSFQPTELQWS). The chain crosses the membrane as a helical span at residues 96–116 (GVCILLTLGAALWCLPMGLMV). At 117-124 (RLLGCRRT) the chain is on the cytoplasmic side. The helical transmembrane segment at 125–145 (ILIQLLPNFLGWFLTVFARSV) threads the bilayer. The Extracellular portion of the chain corresponds to 146–152 (PMLYAGR). Residues 153 to 173 (FFLGMCGGAHCVVVPIYNAEI) form a helical membrane-spanning segment. Residues 174-183 (STTKKRGAMG) lie on the Cytoplasmic side of the membrane. Residues 184–204 (VVFEGACICGVIYSFAMSLFL) form a helical membrane-spanning segment. Residues 205 to 207 (ELR) lie on the Extracellular side of the membrane. A helical transmembrane segment spans residues 208-228 (IINFVNLGLLALGPLQILMPE). Residues 229-293 (SPAYYVDHGN…YKKVRRSLAR (65 aa)) are Cytoplasmic-facing. A helical membrane pass occupies residues 294 to 314 (SLAIALLQKLCGALIFIFYGL). Topologically, residues 315–324 (NMLDCLRIRR) are extracellular. The helical transmembrane segment at 325 to 345 (EFGLILCLGLILGFLACFFLV) threads the bilayer. Residues 346–351 (DRLGRR) are Cytoplasmic-facing. Residues 352-372 (PLLIFSSAGIVFVSIYLGLHF) traverse the membrane as a helical segment. Topologically, residues 373–374 (KV) are extracellular. Residues 375–395 (WMTMGLTVMSWIALFCIAIFV) form a helical membrane-spanning segment. Residues 396-420 (GCYTAGVGSLTWVLNAELLVRPMRP) are Cytoplasmic-facing. A helical membrane pass occupies residues 421–441 (LGCSIVCAFNWLTAFFVICWF). At 442–450 (GSHGVKCQP) the chain is on the extracellular side. A helical transmembrane segment spans residues 451–471 (YLFLLFAIIASLILLFSLIYI). Over 472-507 (PETKKLSSAKIQQRLGGLINRPAVITFTSSSDSSNA) the chain is Cytoplasmic.

Belongs to the major facilitator superfamily. Sugar transporter (TC 2.A.1.1) family. Glucose transporter subfamily.

The protein localises to the cell membrane. It is found in the perikaryon. It localises to the cell projection. Its function is as follows. Facilitative glucose transporter that can also mediate the uptake of various other monosaccharides across the cell membrane. The sequence is that of Glucose transporter type 3 (Glut3) from Drosophila melanogaster (Fruit fly).